Here is a 138-residue protein sequence, read N- to C-terminus: Ribosome-binding factor A (138 aa).

It belongs to the RbfA family. As to quaternary structure, monomer. Binds 30S ribosomal subunits, but not 50S ribosomal subunits or 70S ribosomes.

It is found in the cytoplasm. One of several proteins that assist in the late maturation steps of the functional core of the 30S ribosomal subunit. Associates with free 30S ribosomal subunits (but not with 30S subunits that are part of 70S ribosomes or polysomes). Required for efficient processing of 16S rRNA. May interact with the 5'-terminal helix region of 16S rRNA. The chain is Ribosome-binding factor A from Sodalis glossinidius (strain morsitans).